A 336-amino-acid polypeptide reads, in one-letter code: Probable deoxyhypusine synthase (336 aa).

K308 acts as the Nucleophile in catalysis.

It belongs to the deoxyhypusine synthase family. Requires NAD(+) as cofactor.

The catalysed reaction is [eIF5A protein]-L-lysine + spermidine = [eIF5A protein]-deoxyhypusine + propane-1,3-diamine. It functions in the pathway protein modification; eIF5A hypusination. Its function is as follows. Catalyzes the NAD-dependent oxidative cleavage of spermidine and the subsequent transfer of the butylamine moiety of spermidine to the epsilon-amino group of a specific lysine residue of the eIF-5A precursor protein to form the intermediate deoxyhypusine residue. The chain is Probable deoxyhypusine synthase from Pyrococcus furiosus (strain ATCC 43587 / DSM 3638 / JCM 8422 / Vc1).